The following is a 249-amino-acid chain: ATP synthase subunit a, chloroplastic (249 aa).

5 helical membrane-spanning segments follow: residues 40–60 (QVLITSWVVIAILLGSAVLAV), 97–117 (VPFIGTLFLFIFVSNWSGALL), 136–156 (INTTVALALLTSVAYFYAGLS), 201–221 (LVVVVLVSLVPLVVPIPVMFL), and 222–242 (GLFTSGIQALIFATLAAAYIG).

The protein belongs to the ATPase A chain family. In terms of assembly, F-type ATPases have 2 components, CF(1) - the catalytic core - and CF(0) - the membrane proton channel. CF(1) has five subunits: alpha(3), beta(3), gamma(1), delta(1), epsilon(1). CF(0) has four main subunits: a, b, b' and c.

The protein resides in the plastid. The protein localises to the chloroplast thylakoid membrane. Its function is as follows. Key component of the proton channel; it plays a direct role in the translocation of protons across the membrane. The sequence is that of ATP synthase subunit a, chloroplastic from Draba nemorosa (Woodland whitlowgrass).